Here is a 314-residue protein sequence, read N- to C-terminus: Homoserine O-succinyltransferase (314 aa).

The active-site Acyl-thioester intermediate is the Cys142. Positions 163 and 192 each coordinate substrate. His235 (proton acceptor) is an active-site residue. Residue Glu237 is part of the active site. Arg249 provides a ligand contact to substrate.

Belongs to the MetA family.

Its subcellular location is the cytoplasm. It carries out the reaction L-homoserine + succinyl-CoA = O-succinyl-L-homoserine + CoA. The protein operates within amino-acid biosynthesis; L-methionine biosynthesis via de novo pathway; O-succinyl-L-homoserine from L-homoserine: step 1/1. Its function is as follows. Transfers a succinyl group from succinyl-CoA to L-homoserine, forming succinyl-L-homoserine. This is Homoserine O-succinyltransferase from Shewanella pealeana (strain ATCC 700345 / ANG-SQ1).